The primary structure comprises 108 residues: Con-Ins K1 (108 aa).

The N-terminal stretch at 1–24 (MTTSSYFLLVALGLLLYVCQSSFG) is a signal peptide. A propeptide spanning residues 25-28 (SPHT) is cleaved from the precursor. Disulfide bonds link C41-C90, C53-C103, and C89-C94. E44 is modified (4-carboxyglutamate). A propeptide spans 57-83 (RKRRGFPSMLKARAKRNEAFLLQRDGR) (c peptide). At E87 the chain carries 4-carboxyglutamate. Glutamine amide is present on Q107.

The protein belongs to the insulin family. In terms of assembly, heterodimer of A and B chains; disulfide-linked. As to expression, expressed by the venom gland.

The protein localises to the secreted. This venom insulin, from a fish-hunting cone snail, facilitates prey capture by rapidly inducing hypoglycemic shock. It is one of the smallest known insulin found in nature and lacks the C-terminal segment of the B chain that, in human insulin, mediates engagement of the insulin receptor (INSR) and assembly of the hormone's hexameric storage form. Despite lacking this segment, it both binds and activates human insulin receptor (long isoform (HIR-B)) with a moderate potency (EC(50)=30.45 nM). In vivo, intraperitoneal injection of this peptide into zebrafish lowers blood glucose with a lower potency than human insulin. In addition, when applied to water, this peptide reduces overall locomotor activity of zebrafish larvae, observed as a significant decrease in the percentage of time spent swimming and movement frequency. When tested on a mouse model of diabetes, this insulin also lowers blood glucose with a 20-fold lower potency than human insulin. This is Con-Ins K1 from Conus kinoshitai (Kinoshita's cone).